The chain runs to 478 residues: Aspartyl/glutamyl-tRNA(Asn/Gln) amidotransferase subunit B (478 aa).

It belongs to the GatB/GatE family. GatB subfamily. In terms of assembly, heterotrimer of A, B and C subunits.

The enzyme catalyses L-glutamyl-tRNA(Gln) + L-glutamine + ATP + H2O = L-glutaminyl-tRNA(Gln) + L-glutamate + ADP + phosphate + H(+). The catalysed reaction is L-aspartyl-tRNA(Asn) + L-glutamine + ATP + H2O = L-asparaginyl-tRNA(Asn) + L-glutamate + ADP + phosphate + 2 H(+). Allows the formation of correctly charged Asn-tRNA(Asn) or Gln-tRNA(Gln) through the transamidation of misacylated Asp-tRNA(Asn) or Glu-tRNA(Gln) in organisms which lack either or both of asparaginyl-tRNA or glutaminyl-tRNA synthetases. The reaction takes place in the presence of glutamine and ATP through an activated phospho-Asp-tRNA(Asn) or phospho-Glu-tRNA(Gln). The protein is Aspartyl/glutamyl-tRNA(Asn/Gln) amidotransferase subunit B of Alkalilimnicola ehrlichii (strain ATCC BAA-1101 / DSM 17681 / MLHE-1).